The following is a 206-amino-acid chain: Pyridoxine/pyridoxamine 5'-phosphate oxidase (206 aa).

FMN-binding positions include 53–58, 68–69, Lys75, and Gln97; these read RMVLLK and YT. Lys58 provides a ligand contact to substrate. Tyr115, Arg119, and Ser123 together coordinate substrate. FMN is bound by residues 132-133 and Trp177; that span reads QS. 183–185 serves as a coordination point for substrate; that stretch reads RLH. Arg187 provides a ligand contact to FMN.

This sequence belongs to the pyridoxamine 5'-phosphate oxidase family. As to quaternary structure, homodimer. It depends on FMN as a cofactor.

It carries out the reaction pyridoxamine 5'-phosphate + O2 + H2O = pyridoxal 5'-phosphate + H2O2 + NH4(+). The catalysed reaction is pyridoxine 5'-phosphate + O2 = pyridoxal 5'-phosphate + H2O2. It participates in cofactor metabolism; pyridoxal 5'-phosphate salvage; pyridoxal 5'-phosphate from pyridoxamine 5'-phosphate: step 1/1. Its pathway is cofactor metabolism; pyridoxal 5'-phosphate salvage; pyridoxal 5'-phosphate from pyridoxine 5'-phosphate: step 1/1. Functionally, catalyzes the oxidation of either pyridoxine 5'-phosphate (PNP) or pyridoxamine 5'-phosphate (PMP) into pyridoxal 5'-phosphate (PLP). This is Pyridoxine/pyridoxamine 5'-phosphate oxidase from Rhizobium johnstonii (strain DSM 114642 / LMG 32736 / 3841) (Rhizobium leguminosarum bv. viciae).